The primary structure comprises 563 residues: Phospholipase B-like protein F (563 aa).

An N-terminal signal peptide occupies residues 1-21 (MKIINSFVFIFVLLFVFNTNA). Residues Asn85, Asn107, Asn118, Asn121, Asn208, Asn312, and Asn537 are each glycosylated (N-linked (GlcNAc...) asparagine).

This sequence belongs to the phospholipase B-like family.

Its subcellular location is the secreted. Functionally, probable phospholipase. The chain is Phospholipase B-like protein F (plbF) from Dictyostelium discoideum (Social amoeba).